Consider the following 205-residue polypeptide: MIDPDGFRPNVGIVLMREDGQVFWARRVRRDGWQFPQGGMNTDETPVEAMYRELREETGLLPEHVELLGATPGWLRYRLPSRAVRRNERQVCIGQKQVWFLLQFTGQESHLKLDHTDSPEFDHWRWVDFWYPVEHVVMFKRGVYARALRHLAPLAQTVAGPAAVGVMPQRALEAWLPGSSAAGHDRPRKRPRKRGGVLPVRINND.

Residues glycine 6 to arginine 149 enclose the Nudix hydrolase domain. The Nudix box motif lies at glycine 38–glycine 59. The disordered stretch occupies residues glycine 178–aspartate 205. A compositionally biased stretch (basic residues) spans arginine 186–glycine 195.

The protein belongs to the Nudix hydrolase family. RppH subfamily. It depends on a divalent metal cation as a cofactor.

Its function is as follows. Accelerates the degradation of transcripts by removing pyrophosphate from the 5'-end of triphosphorylated RNA, leading to a more labile monophosphorylated state that can stimulate subsequent ribonuclease cleavage. The polypeptide is RNA pyrophosphohydrolase (Xanthomonas campestris pv. campestris (strain 8004)).